A 170-amino-acid chain; its full sequence is Cathelicidin antimicrobial peptide (170 aa).

The N-terminal stretch at 1 to 30 (MKTQRDGHSLGGWSLMLLLLGLLMPLAIVA) is a signal peptide. Residues 31–131 (QVLSYKEAVL…DISCDKDNRR (101 aa)) constitute a propeptide, cathelin-like domain (CLD). 2 cysteine pairs are disulfide-bonded: cysteine 86-cysteine 97 and cysteine 108-cysteine 125. The active core stretch occupies residues 150–162 (FKRIVQRIKDFLQ).

It belongs to the cathelicidin family. In terms of assembly, monomer, homodimer or homotrimer (in vitro). Oligomerizes as tetra- or hexamer in solution (in vitro). Post-translationally, proteolytically cleaved by proteinase PRTN3 into antibacterial peptide LL-37. Proteolytically cleaved by cathepsin CTSG and neutrophil elastase ELANE. In terms of processing, resistant to proteolytic degradation in solution, and when bound to both zwitterionic (mimicking mammalian membranes) and negatively charged membranes (mimicking bacterial membranes). After secretion onto the skin surface, the CAMP gene product is processed by a serine protease-dependent mechanism into multiple novel antimicrobial peptides distinct from and shorter than cathelicidin LL-37. These peptides show enhanced antimicrobial action, acquiring the ability to kill skin pathogens such as S.aureus, E.coli and C.albicans. These peptides have lost the ability to stimulate CXCL8/IL8 release from keratinocytes. The peptides act synergistically, killing bacteria at lower concentrations when present together, and maintain activity at increased salt condition.

The protein resides in the secreted. The protein localises to the vesicle. Antimicrobial protein that is an integral component of the innate immune system. Binds to bacterial lipopolysaccharides (LPS). Acts via neutrophil N-formyl peptide receptors to enhance the release of CXCL2. Postsecretory processing generates multiple cathelicidin antimicrobial peptides with various lengths which act as a topical antimicrobial defense in sweat on skin. The unprocessed precursor form, cathelicidin antimicrobial peptide, inhibits the growth of Gram-negative E.coli and E.aerogenes with efficiencies comparable to that of the mature peptide LL-37 (in vitro). Its function is as follows. Antimicrobial peptide that is an integral component of the innate immune system. Binds to bacterial lipopolysaccharides (LPS). Causes membrane permeabilization by forming transmembrane pores (in vitro). Causes lysis of E.coli. Exhibits antimicrobial activity against Gram-negative bacteria such as P.aeruginosa, S.typhimurium, E.aerogenes, E.coli and P.syringae, Gram-positive bacteria such as L.monocytogenes, S.epidermidis, S.pyogenes and S.aureus, as well as vancomycin-resistant enterococci (in vitro). Exhibits antimicrobial activity against methicillin-resistant S.aureus, P.mirabilis, and C.albicans in low-salt media, but not in media containing 100 mM NaCl (in vitro). Forms chiral supramolecular assemblies with quinolone signal (PQS) molecules of P.aeruginosa, which may lead to interference of bacterial quorum signaling and perturbance of bacterial biofilm formation. May form supramolecular fiber-like assemblies on bacterial membranes. Induces cytokine and chemokine producation as well as TNF/TNFA and CSF2/GMCSF production in normal human keratinocytes. Exhibits hemolytic activity against red blood cells. Functionally, exhibits antimicrobial activity against E.coli and B.megaterium (in vitro). This Hylobates moloch (Silvery gibbon) protein is Cathelicidin antimicrobial peptide.